The following is a 1270-amino-acid chain: Myosin-1 (1270 aa).

The segment at 1–40 is disordered; it reads MGHSRRPAGGEKKSRGFGRSKAAADVGDGRQAGKPQVKKA. A Myosin motor domain is found at 50 to 729; the sequence is IGVSDLTLLS…TLFALETMRD (680 aa). Position 143-150 (143-150) interacts with ATP; the sequence is GESGAGKT. Serine 371 carries the phosphoserine modification. Residues 418-500 are actin-binding; sequence SIGILDIYGF…PGVFAALNDA (83 aa). 2 IQ domains span residues 733–753 and 754–779; these read HNMAIRIQRAWRNYLRYRIEC and AIRIQRFWRRMTGGLEFIKLRDQGHQ. The region spanning 787–980 is the TH1 domain; it reads RRRMSLLGSR…TIHTSAGEPP (194 aa). Disordered regions lie at residues 960 to 1102 and 1144 to 1270; these read GASN…VLYD and PEAY…DDEW. Polar residues predominate over residues 963–974; the sequence is NVDSYKSSTIHT. The segment covering 1023-1058 has biased composition (pro residues); it reads ARQPMPQPTPQPAAVQPPPAPRPAVSPAAQPRPVPQ. The segment covering 1059 to 1078 has biased composition (low complexity); the sequence is PVAAVAAAQHTRNASSSSTR. The span at 1079-1088 shows a compositional bias: pro residues; sequence APPPPPPATP. Residues 1092 to 1153 form the SH3 domain; sequence QRKPMAKVLY…PEAYLEEQVA (62 aa). Pro residues predominate over residues 1157–1167; the sequence is KPAPPPPPPAA. Low complexity-rich tracts occupy residues 1168-1186 and 1238-1252; these read PRASPVPATNGAAAAVAAK and NSASNASLAGGLAEA.

The protein belongs to the TRAFAC class myosin-kinesin ATPase superfamily. Myosin family. Phosphorylation of the TEDS site (Ser-371) is required for the polarization of the actin cytoskeleton. Phosphorylation probably activates the myosin-I ATPase activity.

It localises to the cytoplasm. It is found in the cytoskeleton. The protein resides in the actin patch. Its function is as follows. Type-I myosin implicated in the organization of the actin cytoskeleton. Required for proper actin cytoskeleton polarization. At the cell cortex, assembles in patch-like structures together with proteins from the actin-polymerizing machinery and promotes actin assembly. Functions as actin nucleation-promoting factor (NPF) for the Arp2/3 complex. Plays an important role in polarized growth, spore germination, hyphal morphogenesis, and septal wall formation. The chain is Myosin-1 (myoA) from Aspergillus niger (strain ATCC MYA-4892 / CBS 513.88 / FGSC A1513).